The chain runs to 273 residues: NH(3)-dependent NAD(+) synthetase (273 aa).

45 to 52 (GISGGQDS) serves as a coordination point for ATP. Asp-51 lines the Mg(2+) pocket. Arg-139 is a deamido-NAD(+) binding site. Thr-159 lines the ATP pocket. Position 164 (Glu-164) interacts with Mg(2+). 2 residues coordinate deamido-NAD(+): Lys-172 and Asp-179. ATP-binding residues include Lys-188 and Thr-210. Deamido-NAD(+) is bound at residue 259-260 (HK).

It belongs to the NAD synthetase family. In terms of assembly, homodimer.

It catalyses the reaction deamido-NAD(+) + NH4(+) + ATP = AMP + diphosphate + NAD(+) + H(+). It functions in the pathway cofactor biosynthesis; NAD(+) biosynthesis; NAD(+) from deamido-NAD(+) (ammonia route): step 1/1. Catalyzes the ATP-dependent amidation of deamido-NAD to form NAD. Uses ammonia as a nitrogen source. This Bacillus pumilus (strain SAFR-032) protein is NH(3)-dependent NAD(+) synthetase.